A 230-amino-acid polypeptide reads, in one-letter code: Large ribosomal subunit protein uL1 (230 aa).

The protein belongs to the universal ribosomal protein uL1 family. As to quaternary structure, part of the 50S ribosomal subunit.

Functionally, binds directly to 23S rRNA. The L1 stalk is quite mobile in the ribosome, and is involved in E site tRNA release. Protein L1 is also a translational repressor protein, it controls the translation of the L11 operon by binding to its mRNA. The chain is Large ribosomal subunit protein uL1 from Erythrobacter litoralis (strain HTCC2594).